Here is a 348-residue protein sequence, read N- to C-terminus: Holliday junction branch migration complex subunit RuvB (348 aa).

The tract at residues 4-184 (ADRLIAASGR…FGIVQRLEFY (181 aa)) is large ATPase domain (RuvB-L). ATP contacts are provided by residues Ile-23, Arg-24, Gly-65, Lys-68, Thr-69, Thr-70, 131-133 (EDF), Arg-174, Tyr-184, and Arg-221. Residue Thr-69 participates in Mg(2+) binding. A small ATPAse domain (RuvB-S) region spans residues 185–255 (SDKDLATIVS…VADMALNLLD (71 aa)). A head domain (RuvB-H) region spans residues 258 to 348 (ERGFDHSDRR…GGDFSEPGDE (91 aa)). Positions 294, 313, and 318 each coordinate DNA.

The protein belongs to the RuvB family. In terms of assembly, homohexamer. Forms an RuvA(8)-RuvB(12)-Holliday junction (HJ) complex. HJ DNA is sandwiched between 2 RuvA tetramers; dsDNA enters through RuvA and exits via RuvB. An RuvB hexamer assembles on each DNA strand where it exits the tetramer. Each RuvB hexamer is contacted by two RuvA subunits (via domain III) on 2 adjacent RuvB subunits; this complex drives branch migration. In the full resolvosome a probable DNA-RuvA(4)-RuvB(12)-RuvC(2) complex forms which resolves the HJ.

The protein localises to the cytoplasm. It carries out the reaction ATP + H2O = ADP + phosphate + H(+). In terms of biological role, the RuvA-RuvB-RuvC complex processes Holliday junction (HJ) DNA during genetic recombination and DNA repair, while the RuvA-RuvB complex plays an important role in the rescue of blocked DNA replication forks via replication fork reversal (RFR). RuvA specifically binds to HJ cruciform DNA, conferring on it an open structure. The RuvB hexamer acts as an ATP-dependent pump, pulling dsDNA into and through the RuvAB complex. RuvB forms 2 homohexamers on either side of HJ DNA bound by 1 or 2 RuvA tetramers; 4 subunits per hexamer contact DNA at a time. Coordinated motions by a converter formed by DNA-disengaged RuvB subunits stimulates ATP hydrolysis and nucleotide exchange. Immobilization of the converter enables RuvB to convert the ATP-contained energy into a lever motion, pulling 2 nucleotides of DNA out of the RuvA tetramer per ATP hydrolyzed, thus driving DNA branch migration. The RuvB motors rotate together with the DNA substrate, which together with the progressing nucleotide cycle form the mechanistic basis for DNA recombination by continuous HJ branch migration. Branch migration allows RuvC to scan DNA until it finds its consensus sequence, where it cleaves and resolves cruciform DNA. This is Holliday junction branch migration complex subunit RuvB from Pseudomonas putida (strain GB-1).